Here is a 667-residue protein sequence, read N- to C-terminus: Long-chain-fatty-acid--CoA ligase ACSBG2 (667 aa).

Basic and acidic residues predominate over residues 1–14 (MTQEKKAEDPDRGM). Residues 1–20 (MTQEKKAEDPDRGMDTTSAA) form a disordered region. Residues 227-235 (TSGTTGSPK), 418-423 (EIYGMT), D496, R511, and R624 contribute to the ATP site.

This sequence belongs to the ATP-dependent AMP-binding enzyme family. Bubblegum subfamily.

The protein localises to the cytoplasm. It localises to the membrane. The enzyme catalyses a long-chain fatty acid + ATP + CoA = a long-chain fatty acyl-CoA + AMP + diphosphate. The catalysed reaction is (5Z,8Z,11Z,14Z)-eicosatetraenoate + ATP + CoA = (5Z,8Z,11Z,14Z)-eicosatetraenoyl-CoA + AMP + diphosphate. It carries out the reaction hexadecanoate + ATP + CoA = hexadecanoyl-CoA + AMP + diphosphate. It catalyses the reaction (9Z)-octadecenoate + ATP + CoA = (9Z)-octadecenoyl-CoA + AMP + diphosphate. The enzyme catalyses (9Z,12Z)-octadecadienoate + ATP + CoA = (9Z,12Z)-octadecadienoyl-CoA + AMP + diphosphate. The catalysed reaction is tetracosanoate + ATP + CoA = tetracosanoyl-CoA + AMP + diphosphate. Its function is as follows. Catalyzes the conversion of fatty acids such as long chain and very long-chain fatty acids to their active form acyl-CoAs for both synthesis of cellular lipids, and degradation via beta-oxidation. Can activate diverse saturated, monosaturated and polyunsaturated fatty acids. Has increased ability to activate oleic and linoleic acid. May play a role in spermatogenesis. This chain is Long-chain-fatty-acid--CoA ligase ACSBG2, found in Rattus norvegicus (Rat).